The following is a 159-amino-acid chain: Transcriptional repressor NrdR (159 aa).

Residues 3–34 (CPFCRHEDTQVVDSRVSEDGAAIRRRRRCSAC) fold into a zinc finger. Positions 49 to 139 (PAVVKKDGSR…VYRRFEDVSE (91 aa)) constitute an ATP-cone domain.

The protein belongs to the NrdR family. The cofactor is Zn(2+).

Functionally, negatively regulates transcription of bacterial ribonucleotide reductase nrd genes and operons by binding to NrdR-boxes. The protein is Transcriptional repressor NrdR of Burkholderia multivorans (strain ATCC 17616 / 249).